Consider the following 91-residue polypeptide: Small ribosomal subunit protein uS19 (91 aa).

The protein belongs to the universal ribosomal protein uS19 family.

Functionally, protein S19 forms a complex with S13 that binds strongly to the 16S ribosomal RNA. This chain is Small ribosomal subunit protein uS19, found in Aliarcobacter butzleri (strain RM4018) (Arcobacter butzleri).